Reading from the N-terminus, the 1130-residue chain is Roquin-1 (1130 aa).

Zn(2+) contacts are provided by Cys-14, Cys-17, Cys-33, His-35, Cys-38, Cys-50, and Asp-53. The RING-type; degenerate zinc-finger motif lies at 14–54 (CPICTQTFDETIRKPISLGCGHTVCKMCLNKLHRKACPFDQ). Positions 128–176 (VLSRPMQRKLVTLVHCQLVEEEGRIRAMRAARSLGERTVTELILQHQNP) are HEPN-N. The segment at 177 to 326 (QQLSSNLWAA…MQSIIDKLQT (150 aa)) is ROQ. An HEPN-C region spans residues 327–399 (PASFAQSVQE…GLVDYIQNHS (73 aa)). The C3H1-type zinc finger occupies 413–441 (KYKTYMCRDMKQRGGCPRGASCTFAHSQE). Phosphoserine is present on Ser-462. Disordered stretches follow at residues 493 to 567 (LPNG…DLPP) and 722 to 750 (PHPA…PSLD). The span at 497–506 (IASSGSTVTQ) shows a compositional bias: polar residues. Phosphoserine occurs at positions 531 and 535. Pro residues-rich tracts occupy residues 553–567 (NPHP…DLPP) and 732–746 (PRDP…PQPH). A phosphoserine mark is found at Ser-861, Ser-1107, and Ser-1110. Residues 1100 to 1130 (KTSSLNLSEDSEGGGDNNDSQRSGVVSNSAP) form a disordered region. A compositionally biased stretch (polar residues) spans 1116 to 1130 (NNDSQRSGVVSNSAP).

As to quaternary structure, interacts with DDX6 and EDC4. Interacts with CCR4-NOT deadenylase complex. Interacts with RC3H1; the interaction is RNA independent. In terms of processing, proteolytically cleaved after Arg-510 and Arg-579 by MALT1 in activated CD4(+) T cells; cleavage at Arg-510 and Arg-579 is critical for promoting RC3H1 degradation in response to T-cell receptor (TCR) stimulation, and hence is necessary for prolonging the stability of a set of mRNAs controlling Th17 cell differentiation. Widely expressed, with highest levels in lymph node and thymus and slightly lesser amounts in brain, lung, and spleen (at protein level). Very weak expression in heart, muscle, and kidney (at protein level). Expressed in CD4(+) helper T-cells (at protein level).

It localises to the cytoplasm. The protein localises to the P-body. Its subcellular location is the cytoplasmic granule. It catalyses the reaction S-ubiquitinyl-[E2 ubiquitin-conjugating enzyme]-L-cysteine + [acceptor protein]-L-lysine = [E2 ubiquitin-conjugating enzyme]-L-cysteine + N(6)-ubiquitinyl-[acceptor protein]-L-lysine.. Its pathway is protein modification; protein ubiquitination. In terms of biological role, post-transcriptional repressor of mRNAs containing a conserved stem loop motif, called constitutive decay element (CDE), which is often located in the 3'-UTR, as in HMGXB3, ICOS, IER3, NFKBID, NFKBIZ, PPP1R10, TNF, TNFRSF4 and in many more mRNAs. Cleaves translationally inactive mRNAs harboring a stem-loop (SL), often located in their 3'-UTRs, during the early phase of inflammation in a helicase UPF1-independent manner. Binds to CDE and promotes mRNA deadenylation and degradation. This process does not involve miRNAs. In follicular helper T (Tfh) cells, represses of ICOS and TNFRSF4/Ox40 expression, thus preventing spontaneous Tfh cell differentiation, germinal center B-cell differentiation in the absence of immunization and autoimmunity. In resting or LPS-stimulated macrophages, controls inflammation by suppressing TNF expression. Also recognizes CDE in its own mRNA and in that of paralogous RC3H2, possibly leading to feedback loop regulation. Inhibits cooperatively with ZC3H12A the differentiation of helper T cells Th17 in lungs. They repress target mRNA encoding the Th17 cell-promoting factors IL6, ICOS, REL, IRF4, NFKBID and NFKBIZ. The cooperation requires RNA-binding by RC3H1 and the nuclease activity of ZC3H12A. Recognizes and binds mRNAs containing a hexaloop stem-loop motif, called alternative decay element (ADE). Together with ZC3H12A, destabilizes TNFRSF4/OX40 mRNA by binding to the conserved stem loop structure in its 3'UTR. Able to interact with double-stranded RNA. miRNA-binding protein that regulates microRNA homeostasis. Enhances DICER-mediated processing of pre-MIR146a but reduces mature MIR146a levels through an increase of 3' end uridylation. Both inhibits ICOS mRNA expression and they may act together to exert the suppression. Acts as a ubiquitin E3 ligase. Pairs with E2 enzymes UBE2A, UBE2B, UBE2D2, UBE2F, UBE2G1, UBE2G2 and UBE2L3 and produces polyubiquitin chains. Shows the strongest activity when paired with UBE2N:UBE2V1 or UBE2N:UBE2V2 E2 complexes and generate both short and long polyubiquitin chains. This is Roquin-1 from Mus musculus (Mouse).